A 75-amino-acid chain; its full sequence is uncharacterized protein (75 aa).

Residues Met1–Ala18 form the signal peptide.

This is an uncharacterized protein from Treponema pallidum (strain Nichols).